A 511-amino-acid polypeptide reads, in one-letter code: Maturase K (511 aa).

This sequence belongs to the intron maturase 2 family. MatK subfamily.

Its subcellular location is the plastid. The protein resides in the chloroplast. In terms of biological role, usually encoded in the trnK tRNA gene intron. Probably assists in splicing its own and other chloroplast group II introns. This is Maturase K from Pistia stratiotes (Water lettuce).